A 2448-amino-acid polypeptide reads, in one-letter code: Non-reducing polyketide synthase mapC (2448 aa).

An N-terminal acylcarrier protein transacylase domain (SAT) region spans residues 14–226; sequence VLFGPQCPDI…HHEAHREGIQ (213 aa). The disordered stretch occupies residues 330 to 350; it reads GFSNESPQPSTASLSNSVQTF. In terms of domain architecture, Ketosynthase family 3 (KS3) spans 359-775; the sequence is ASPIAITGMA…GSNAALIVKE (417 aa). Residues Cys524, His659, and His698 each act as for beta-ketoacyl synthase activity in the active site. Positions 885-1188 are malonyl-CoA:ACP transacylase (MAT) domain; sequence LCFGGQNGLT…HKIDLGGSSG (304 aa). Ser972 serves as the catalytic For acyl/malonyl transferase activity. Residues 1256 to 1388 form an N-terminal hotdog fold region; the sequence is GQEAGLLCQL…GTVCLHQERS (133 aa). Residues 1256 to 1565 form the PKS/mFAS DH domain; the sequence is GQEAGLLCQL…FTSVSIRSLT (310 aa). The segment at 1261–1564 is product template (PT) domain; the sequence is LLCQLSESPD…RFTSVSIRSL (304 aa). His1290 serves as the catalytic Proton acceptor; for dehydratase activity. A C-terminal hotdog fold region spans residues 1414 to 1565; sequence ASNGLKGSTV…FTSVSIRSLT (152 aa). Asp1471 functions as the Proton donor; for dehydratase activity in the catalytic mechanism. The Carrier domain maps to 1610–1684; the sequence is AKDLATVQEM…GLVEHIFPGH (75 aa). Ser1644 bears the O-(pantetheine 4'-phosphoryl)serine mark. The segment at 1841–2076 is methyltransferase (CMeT) domain; sequence PYALEHDLLQ…GFEWVDWTNN (236 aa). Residues Ser2227, Asp2385, and His2417 each act as for thioesterase activity in the active site.

Its subcellular location is the cytoplasm. The protein localises to the cytosol. The catalysed reaction is 3 malonyl-CoA + acetyl-CoA + S-adenosyl-L-methionine + H(+) = 5-methylorsellinate + S-adenosyl-L-homocysteine + 3 CO2 + 4 CoA. It functions in the pathway secondary metabolite biosynthesis; terpenoid biosynthesis. Its function is as follows. Non-reducing polyketide synthase; part of the gene cluster that mediates the biosynthesis of mycophenolic acid (MPA), the first isolated antibiotic natural product in the world obtained from a culture of Penicillium brevicompactum in 1893. MpaC catalyzes the synthesis of 5-methylorsellinic acid (5MOA) via the condensation of 1 acetyl-CoA starter unit with 3 malonyl-CoA units and one methylation step. The first step of the pathway is the synthesis of 5-methylorsellinic acid (5MOA) by the cytosolic polyketide synthase mpaC. 5MOA is then converted to the phthalide compound 5,7-dihydroxy-4,6-dimethylphthalide (DHMP) by the endoplasmic reticulum-bound cytochrome P450 monooxygenase mpaDE. MpaDE first catalyzes hydroxylation of 5-MOA to 4,6-dihydroxy-2-(hydroxymethyl)-3-methylbenzoic acid (DHMB). MpaDE then acts as a lactone synthase that catalyzes the ring closure to convert DHMB into DHMP. The next step is the prenylation of DHMP by the Golgi apparatus-associated prenyltransferase mpaA to yield farnesyl-DHMP (FDHMP). The ER-bound oxygenase mpaB then mediates the oxidative cleavage the C19-C20 double bond in FDHMP to yield FDHMP-3C via a mycophenolic aldehyde intermediate. The O-methyltransferase mpaG catalyzes the methylation of FDHMP-3C to yield MFDHMP-3C. After the cytosolic methylation of FDHMP-3C, MFDHMP-3C enters into peroxisomes probably via free diffusion due to its low molecular weight. Upon a peroxisomal CoA ligation reaction, catalyzed by a beta-oxidation component enzyme acyl-CoA ligase ACL891, MFDHMP-3C-CoA would then be restricted to peroxisomes for the following beta-oxidation pathway steps. The peroxisomal beta-oxidation machinery than converts MFDHMP-3C-CoA into MPA_CoA, via a beta-oxidation chain-shortening process. Finally mpaH acts as a peroxisomal acyl-CoA hydrolase with high substrate specificity toward MPA-CoA to release the final product MPA. This is Non-reducing polyketide synthase mapC from Penicillium brevicompactum.